A 203-amino-acid chain; its full sequence is Ribosome-binding factor A (203 aa).

Basic and acidic residues predominate over residues 119-141; sequence LAEVRRDARPAGDEDPYRRPRTV. Positions 119–203 are disordered; sequence LAEVRRDARP…SPGGDPTAGR (85 aa). Residues 142-169 are compositionally biased toward acidic residues; sequence DEDDEDEDEDLVDEFDEFDRVEELDADA.

The protein belongs to the RbfA family. Monomer. Binds 30S ribosomal subunits, but not 50S ribosomal subunits or 70S ribosomes.

Its subcellular location is the cytoplasm. Its function is as follows. One of several proteins that assist in the late maturation steps of the functional core of the 30S ribosomal subunit. Associates with free 30S ribosomal subunits (but not with 30S subunits that are part of 70S ribosomes or polysomes). Required for efficient processing of 16S rRNA. May interact with the 5'-terminal helix region of 16S rRNA. The sequence is that of Ribosome-binding factor A from Frankia alni (strain DSM 45986 / CECT 9034 / ACN14a).